The sequence spans 361 residues: Glutamate 5-kinase (361 aa).

Residue Lys14 participates in ATP binding. Residues Ser54, Asp141, and Asn153 each coordinate substrate. Residues 277–355 form the PUA domain; it reads KGAVIINQGA…KGLKPVIHYD (79 aa).

This sequence belongs to the glutamate 5-kinase family.

The protein resides in the cytoplasm. It carries out the reaction L-glutamate + ATP = L-glutamyl 5-phosphate + ADP. Its pathway is amino-acid biosynthesis; L-proline biosynthesis; L-glutamate 5-semialdehyde from L-glutamate: step 1/2. Catalyzes the transfer of a phosphate group to glutamate to form L-glutamate 5-phosphate. This is Glutamate 5-kinase from Chlorobaculum tepidum (strain ATCC 49652 / DSM 12025 / NBRC 103806 / TLS) (Chlorobium tepidum).